The chain runs to 153 residues: Insulin-like growth factor 1 (153 aa).

The segment at 49–77 (GPETLCGAELVDALQFVCGDRGFYFNKPT) is b. 3 cysteine pairs are disulfide-bonded: Cys-54–Cys-96, Cys-66–Cys-109, and Cys-95–Cys-100. The tract at residues 78-89 (GYGSSSRRAPQT) is c. An a region spans residues 90–110 (GIVDECCFRSCDLRRLEMYCA). The tract at residues 111–118 (PLKPAKSA) is d. The propeptide at 119–153 (RSVRAQRHTDMPKAQKEVHLKNTSRGSSGNKNYRM) is e peptide. The disordered stretch occupies residues 120 to 153 (SVRAQRHTDMPKAQKEVHLKNTSRGSSGNKNYRM). Residues 125–138 (RHTDMPKAQKEVHL) show a composition bias toward basic and acidic residues. Residues 139–153 (KNTSRGSSGNKNYRM) are compositionally biased toward polar residues.

It belongs to the insulin family. As to quaternary structure, forms a ternary complex with IGFR1 and ITGAV:ITGB3. Forms a ternary complex with IGFR1 and ITGA6:ITGB4. Forms a ternary complex with IGFBP3 and ALS.

The protein localises to the secreted. The insulin-like growth factors, isolated from plasma, are structurally and functionally related to insulin but have a much higher growth-promoting activity. May be a physiological regulator of [1-14C]-2-deoxy-D-glucose (2DG) transport and glycogen synthesis in osteoblasts. Stimulates glucose transport in bone-derived osteoblastic (PyMS) cells and is effective at much lower concentrations than insulin, not only regarding glycogen and DNA synthesis but also with regard to enhancing glucose uptake. May play a role in synapse maturation. Ca(2+)-dependent exocytosis of IGF1 is required for sensory perception of smell in the olfactory bulb. Acts as a ligand for IGF1R. Binds to the alpha subunit of IGF1R, leading to the activation of the intrinsic tyrosine kinase activity which autophosphorylates tyrosine residues in the beta subunit thus initiating a cascade of down-stream signaling events leading to activation of the PI3K-AKT/PKB and the Ras-MAPK pathways. Binds to integrins ITGAV:ITGB3 and ITGA6:ITGB4. Its binding to integrins and subsequent ternary complex formation with integrins and IGFR1 are essential for IGF1 signaling. Induces the phosphorylation and activation of IGFR1, MAPK3/ERK1, MAPK1/ERK2 and AKT1. As part of the MAPK/ERK signaling pathway, acts as a negative regulator of apoptosis in cardiomyocytes via promotion of STUB1/CHIP-mediated ubiquitination and degradation of ICER-type isoforms of CREM. The protein is Insulin-like growth factor 1 of Sus scrofa (Pig).